The primary structure comprises 200 residues: ATP synthase subunit s, mitochondrial (200 aa).

Residues 1–25 (MMPFGKISQQLCGVKKLPWSCDSRY) constitute a mitochondrion transit peptide. The interval 1–61 (MMPFGKISQQ…SEWLLRCGAM (61 aa)) is N-terminal domain. Glycine 59 serves as a coordination point for Mg(2+). LRR repeat units follow at residues 62–87 (VRYH…KYKI), 88–116 (QAID…KIRL), 117–141 (CKCH…KTIL), and 142–173 (EMEI…LSDL). Threonine 93 is a binding site for Mg(2+).

It belongs to the ATP synthase subunit s family. In terms of assembly, homotetramer. Associates with ATP synthase.

It is found in the mitochondrion. The protein localises to the mitochondrion inner membrane. Functionally, involved in regulation of mitochondrial membrane ATP synthase. Necessary for H(+) conduction of ATP synthase. Facilitates energy-driven catalysis of ATP synthesis by blocking a proton leak through an alternative proton exit pathway. This chain is ATP synthase subunit s, mitochondrial, found in Homo sapiens (Human).